Reading from the N-terminus, the 504-residue chain is ATP-dependent rRNA helicase RRP3 (504 aa).

Low complexity predominate over residues 34 to 62; that stretch reads ASASSAASTKESLPVSETISISTSETPVS. The disordered stretch occupies residues 34 to 99; the sequence is ASASSAASTK…SSSSPPSVQS (66 aa). Positions 68 to 79 are enriched in basic and acidic residues; it reads SNKEDLSTKKDQ. Residues 80 to 99 are compositionally biased toward low complexity; that stretch reads SSASSSSSTSSSSSPPSVQS. The short motif at 98-126 is the Q motif element; sequence QSFTEFDLVPELLESIQSLKYTQPTPIQA. Positions 129-301 constitute a Helicase ATP-binding domain; the sequence is IPHALQGKDI…RSLNSPVQVE (173 aa). Position 142–149 (142–149) interacts with ATP; that stretch reads AETGSGKT. Residues 248-251 carry the DEAD box motif; sequence DEVD. In terms of domain architecture, Helicase C-terminal spans 327 to 471; it reads RLIQIVNLDS…DLPLDEMQGL (145 aa).

It belongs to the DEAD box helicase family. DDX47/RRP3 subfamily. In terms of assembly, interacts with the SSU processome.

Its subcellular location is the nucleus. It catalyses the reaction ATP + H2O = ADP + phosphate + H(+). ATP-dependent rRNA helicase required for pre-ribosomal RNA processing. Involved in the maturation of the 35S-pre-rRNA and to its cleavage to mature 18S rRNA. In Lodderomyces elongisporus (strain ATCC 11503 / CBS 2605 / JCM 1781 / NBRC 1676 / NRRL YB-4239) (Yeast), this protein is ATP-dependent rRNA helicase RRP3.